The sequence spans 517 residues: Acetyl-coenzyme A carboxylase carboxyl transferase subunit beta, chloroplastic (517 aa).

Basic and acidic residues-rich tracts occupy residues 1-17, 24-41, 48-65, and 72-81; these read MKPTKPEGPKKPNKSNE, GDNKEDLEGPKKPNKSNE, and GDKQKDKKDG. Disordered regions lie at residues 1–179 and 204–234; these read MKPT…KEEE and KHRDRKSVPAKERELVPAQSTKRDTDPDSEA. Acidic residues predominate over residues 87 to 131; that stretch reads YDDEYEEDLEYDDEYEEDLEYDDEYEEDLEYDDEEYDDEYEEDLE. 2 stretches are compositionally biased toward basic and acidic residues: residues 132-179 and 209-229; these read GDNK…KEEE and KSVPAKERELVPAQSTKRDTD. A CoA carboxyltransferase N-terminal domain is found at 243-514; sequence LWVHCKLCSG…NSQVINIYNY (272 aa). Residues Cys247, Cys250, Cys266, and Cys269 each contribute to the Zn(2+) site. The C4-type zinc finger occupies 247 to 269; sequence CKLCSGFNYKKILKSKNNVCEQC.

The protein belongs to the AccD/PCCB family. In terms of assembly, acetyl-CoA carboxylase is a heterohexamer composed of biotin carboxyl carrier protein, biotin carboxylase and 2 subunits each of ACCase subunit alpha and ACCase plastid-coded subunit beta (accD). Zn(2+) is required as a cofactor.

The protein localises to the plastid. It is found in the chloroplast stroma. It carries out the reaction N(6)-carboxybiotinyl-L-lysyl-[protein] + acetyl-CoA = N(6)-biotinyl-L-lysyl-[protein] + malonyl-CoA. It functions in the pathway lipid metabolism; malonyl-CoA biosynthesis; malonyl-CoA from acetyl-CoA: step 1/1. Component of the acetyl coenzyme A carboxylase (ACC) complex. Biotin carboxylase (BC) catalyzes the carboxylation of biotin on its carrier protein (BCCP) and then the CO(2) group is transferred by the transcarboxylase to acetyl-CoA to form malonyl-CoA. The protein is Acetyl-coenzyme A carboxylase carboxyl transferase subunit beta, chloroplastic of Oenothera elata subsp. hookeri (Hooker's evening primrose).